A 312-amino-acid chain; its full sequence is Olfactory receptor 10D3 (312 aa).

Residues 1–26 lie on the Extracellular side of the membrane; it reads MEIKNCSVVTEFILLGIPHTEGFETL. N5 carries an N-linked (GlcNAc...) asparagine glycan. A helical membrane pass occupies residues 27 to 47; the sequence is LFVLFLPFYACTLVGNVSILV. Topologically, residues 48–57 are cytoplasmic; the sequence is AVISSTRLHT. The helical transmembrane segment at 58-78 threads the bilayer; the sequence is PMYFFLGNLSVFDMGFSSVTC. Over 79–97 the chain is Extracellular; sequence PKMLFYLMGLSRLISYQDC. An intrachain disulfide couples C97 to C179. A helical transmembrane segment spans residues 98–118; it reads VSQLFFFHFLGSIECFLYTVM. Residues 119–139 lie on the Cytoplasmic side of the membrane; it reads AYDRFAAICHPLRYSVIMNSK. The chain crosses the membrane as a helical span at residues 140–160; sequence ICVALAVGTWLLGCFHSSVLT. Residues 161–197 are Extracellular-facing; that stretch reads SLTFTLPYCGPNEVDHFFCDIPAILPLASADTSLAQR. The chain crosses the membrane as a helical span at residues 198-218; sequence VSFTNVGLVSLVCFLLILLSY. Residues 219–239 lie on the Cytoplasmic side of the membrane; that stretch reads TRITISILSIQSTEGRQRAFS. The helical transmembrane segment at 240 to 260 threads the bilayer; it reads TCSAHLIAILCAYGPIITIYL. Residues 261-266 are Extracellular-facing; the sequence is QPTPNP. Residues 267-287 form a helical membrane-spanning segment; the sequence is MLGTVVQILMNLVGPMLNPLI. Residues 288-312 lie on the Cytoplasmic side of the membrane; sequence YTLRNKEVKIALKKILHGKGSVSEG.

This sequence belongs to the G-protein coupled receptor 1 family.

It localises to the cell membrane. Functionally, potential odorant receptor. The chain is Olfactory receptor 10D3 from Mus musculus (Mouse).